A 451-amino-acid polypeptide reads, in one-letter code: UDP-glucosyltransferase 74AE2 (451 aa).

Histidine 17 (proton acceptor) is an active-site residue. Position 17 (histidine 17) interacts with an anthocyanidin. Aspartate 108 functions as the Charge relay in the catalytic mechanism. Positions 130, 330, 345, 348, 349, 350, 353, 369, and 370 each coordinate UDP-alpha-D-glucose.

This sequence belongs to the UDP-glycosyltransferase family. In terms of tissue distribution, expressed at higher levels in roots than in leaves.

It carries out the reaction (20S)-ginsenoside C-K + UDP-alpha-D-glucose = (20S)-ginsenoside F2 + UDP + H(+). The catalysed reaction is (20S)-protopanaxadiol + UDP-alpha-D-glucose = (20S)-ginsenoside Rh2 + UDP + H(+). Its pathway is secondary metabolite biosynthesis; terpenoid biosynthesis. Component of the dammarane-type triterpene saponins (e.g. PPD-type ginsenosides or panaxosides) biosynthetic pathway. Glycosyltransferase that catalyzes the biosynthesis of ginsenoside Rh2 from protopanaxadiol (PPD) and the conversion of compound K to ginsenoside F2. This is UDP-glucosyltransferase 74AE2 from Panax ginseng (Korean ginseng).